We begin with the raw amino-acid sequence, 366 residues long: Ferredoxin--NADP reductase, leaf isozyme 2, chloroplastic (366 aa).

Residues 1-48 (MAAVNTVSSLPCSKAGAAVAGGAPRPSTCSVFYPPRCWSKRSSGNGVR) constitute a chloroplast transit peptide. The FAD-binding FR-type domain maps to 87–209 (KEPYTGRCLL…TGPVGKEMLM (123 aa)). FAD is bound by residues 145–148 (RLYS), 166–168 (CVK), tyrosine 172, and 183–185 (VCS). Positions 148 and 168 each coordinate NADP(+). Residues cysteine 184 and cysteine 189 are joined by a disulfide bond. Serine 185 is modified (phosphoserine). The residue at position 216 (threonine 216) is a Phosphothreonine. Threonine 224 serves as a coordination point for FAD. Residues threonine 224, 256-257 (VP), 286-287 (SR), lysine 296, 325-326 (GL), and glutamate 364 each bind NADP(+).

The protein belongs to the ferredoxin--NADP reductase type 1 family. As to quaternary structure, heterodimer with LFNR1. Component of high molecular weight thylakoid LFNRs-containing protein complexes containing LIR1, LFNR1, LFNR2, TIC62 and TROL proteins. Interacts directly with LFNR1 and LFNR2; LIR1 increases the affinity of LFNR1 and LFNR2 for TIC62 and subsequent thylakoid relocalization. FAD is required as a cofactor. Post-translationally, may form interchain disulfide bonds with LIR1.

It is found in the plastid. The protein localises to the chloroplast stroma. The protein resides in the chloroplast thylakoid membrane. The enzyme catalyses 2 reduced [2Fe-2S]-[ferredoxin] + NADP(+) + H(+) = 2 oxidized [2Fe-2S]-[ferredoxin] + NADPH. Its pathway is energy metabolism; photosynthesis. In terms of biological role, plays a key role in regulating the relative amounts of cyclic and non-cyclic electron flow to meet the demands of the plant for ATP and reducing power. This is Ferredoxin--NADP reductase, leaf isozyme 2, chloroplastic from Oryza sativa subsp. indica (Rice).